The primary structure comprises 336 residues: Phenylalanine--tRNA ligase alpha subunit (336 aa).

Glu-257 is a Mg(2+) binding site.

This sequence belongs to the class-II aminoacyl-tRNA synthetase family. Phe-tRNA synthetase alpha subunit type 1 subfamily. Tetramer of two alpha and two beta subunits. Mg(2+) serves as cofactor.

The protein resides in the cytoplasm. The catalysed reaction is tRNA(Phe) + L-phenylalanine + ATP = L-phenylalanyl-tRNA(Phe) + AMP + diphosphate + H(+). The protein is Phenylalanine--tRNA ligase alpha subunit of Xanthomonas campestris pv. campestris (strain 8004).